A 2075-amino-acid polypeptide reads, in one-letter code: Autophagy-related protein 2 homolog B (2075 aa).

Residues 13 to 107 (ACRYLLQRYL…LEMVFRPRPR (95 aa)) form the Chorein N-terminal domain. Residues S255, S379, S496, S839, S885, S898, and S1007 each carry the phosphoserine modification. Y1011 bears the Phosphotyrosine mark. A phosphoserine mark is found at S1015 and S1017. T1021 carries the post-translational modification Phosphothreonine. The tract at residues 1373 to 1403 (KAEMKPGVPQRKPKVDSSARSSSHGPVLPEA) is disordered. Residue S1525 is modified to Phosphoserine. Disordered stretches follow at residues 1570–1593 (TSPA…GRHT), 1759–1792 (EPNL…EDVS), and 2055–2075 (RNQI…HGED). A compositionally biased stretch (polar residues) spans 1578 to 1587 (PHSSPSQTPT). The segment covering 2058–2075 (IRPDVRQDESQKWRHGED) has biased composition (basic and acidic residues).

Belongs to the ATG2 family. Interacts with WDR45/WIPI4.

The protein resides in the preautophagosomal structure membrane. Its subcellular location is the lipid droplet. It localises to the endoplasmic reticulum membrane. The enzyme catalyses a 1,2-diacyl-sn-glycero-3-phospho-L-serine(in) = a 1,2-diacyl-sn-glycero-3-phospho-L-serine(out). It catalyses the reaction a 1,2-diacyl-sn-glycero-3-phosphoethanolamine(in) = a 1,2-diacyl-sn-glycero-3-phosphoethanolamine(out). Its function is as follows. Lipid transfer protein required for both autophagosome formation and regulation of lipid droplet morphology and dispersion. Tethers the edge of the isolation membrane (IM) to the endoplasmic reticulum (ER) and mediates direct lipid transfer from ER to IM for IM expansion. Binds to the ER exit site (ERES), which is the membrane source for autophagosome formation, and extracts phospholipids from the membrane source and transfers them to ATG9 (ATG9A or ATG9B) to the IM for membrane expansion. Lipid transfer activity is enhanced by WDR45/WIPI4, which promotes ATG2B-association with phosphatidylinositol 3-monophosphate (PI3P)-containing membranes. The chain is Autophagy-related protein 2 homolog B from Mus musculus (Mouse).